The sequence spans 455 residues: Beta-glucosidase A (455 aa).

Glu-165 functions as the Proton donor in the catalytic mechanism. Glu-363 functions as the Nucleophile in the catalytic mechanism.

The protein belongs to the glycosyl hydrolase 1 family.

The enzyme catalyses Hydrolysis of terminal, non-reducing beta-D-glucosyl residues with release of beta-D-glucose.. This Caldicellulosiruptor saccharolyticus (Caldocellum saccharolyticum) protein is Beta-glucosidase A (bglA).